A 226-amino-acid polypeptide reads, in one-letter code: Cytidylate kinase (226 aa).

9 to 17 (GPAGAGKST) is a binding site for ATP.

This sequence belongs to the cytidylate kinase family. Type 1 subfamily.

The protein resides in the cytoplasm. The catalysed reaction is CMP + ATP = CDP + ADP. It carries out the reaction dCMP + ATP = dCDP + ADP. This is Cytidylate kinase from Clostridium tetani (strain Massachusetts / E88).